The chain runs to 458 residues: Exodeoxyribonuclease 7 large subunit (458 aa).

It belongs to the XseA family. Heterooligomer composed of large and small subunits.

Its subcellular location is the cytoplasm. It carries out the reaction Exonucleolytic cleavage in either 5'- to 3'- or 3'- to 5'-direction to yield nucleoside 5'-phosphates.. Bidirectionally degrades single-stranded DNA into large acid-insoluble oligonucleotides, which are then degraded further into small acid-soluble oligonucleotides. The protein is Exodeoxyribonuclease 7 large subunit of Escherichia coli O6:H1 (strain CFT073 / ATCC 700928 / UPEC).